The sequence spans 564 residues: Asparagine synthetase domain-containing protein CG17486 (564 aa).

Residue Cys-2 is the Nucleophile of the active site. In terms of domain architecture, Glutamine amidotransferase type-2 spans 2-180; that stretch reads CGIFCSVVNN…PLGLFRVKLN (179 aa). An Asparagine synthetase domain is found at 280–541; sequence PFCRLCMQKL…GLRDVVFLKK (262 aa).

The sequence is that of Asparagine synthetase domain-containing protein CG17486 from Drosophila melanogaster (Fruit fly).